The sequence spans 427 residues: Bifunctional enzyme MtnB/MtnX (427 aa).

Residues 1-221 (MRKPLIICDF…LEETAEVKEW (221 aa)) form an HK-MTPenyl-1-P phosphatase region. Positions 222-427 (MSEQKRQELA…KLKALQAYHV (206 aa)) are MTRu-1-P dehydratase. Positions 317 and 319 each coordinate Zn(2+).

The protein in the N-terminal section; belongs to the HAD-like hydrolase superfamily. MtnX family. In the C-terminal section; belongs to the aldolase class II family. MtnB subfamily. In terms of assembly, homotetramer. It depends on Zn(2+) as a cofactor.

The catalysed reaction is 5-(methylsulfanyl)-D-ribulose 1-phosphate = 5-methylsulfanyl-2,3-dioxopentyl phosphate + H2O. It carries out the reaction 2-hydroxy-5-methylsulfanyl-3-oxopent-1-enyl phosphate + H2O = 1,2-dihydroxy-5-(methylsulfanyl)pent-1-en-3-one + phosphate. It functions in the pathway amino-acid biosynthesis; L-methionine biosynthesis via salvage pathway; L-methionine from S-methyl-5-thio-alpha-D-ribose 1-phosphate: step 2/6. Its pathway is amino-acid biosynthesis; L-methionine biosynthesis via salvage pathway; L-methionine from S-methyl-5-thio-alpha-D-ribose 1-phosphate: step 4/6. In terms of biological role, catalyzes the dehydration of methylthioribulose-1-phosphate (MTRu-1-P) into 2,3-diketo-5-methylthiopentyl-1-phosphate (DK-MTP-1-P). Its function is as follows. Dephosphorylates 2-hydroxy-3-keto-5-methylthiopentenyl-1-phosphate (HK-MTPenyl-1-P) yielding 1,2-dihydroxy-3-keto-5-methylthiopentene (DHK-MTPene). The chain is Bifunctional enzyme MtnB/MtnX (mtnB/mtnX) from Bacillus licheniformis (strain ATCC 14580 / DSM 13 / JCM 2505 / CCUG 7422 / NBRC 12200 / NCIMB 9375 / NCTC 10341 / NRRL NRS-1264 / Gibson 46).